Consider the following 394-residue polypeptide: MSATSPITQDVVTFPRKLPEGGKRNLVGLTRPELAEALAAAGTPEKQVKMRVNQIWQWLYERGVRDFNDMTNLAKPYRALLADQFEIAVPEVVSRHVSEDGTRKYLVRIAGGHEVEVVYIPEEDRGTLCVSSQVGCTLTCSFCHTGTQKLVRNLTAGEIVGQIMIARDDLGEWPLPGRNPKNETRLLSNIVLMGMGEPLYNFEAVRDAMKIAMDPEGISLSRRRITLSTSGVVPEIARTAEEIGCMLAVSFHATTDEVRDKLVPINKRWNIATLLDALRDYPKASNSERITFEYVMLKGVNDSDEDARRLVELIKGIPAKINLIPFNEWPGAPYERSSNNRIRAFADIIYKAGYASPIRTPRGEDIMAACGQLKSATERARKSRAQIAAETGLG.

Glu116 serves as the catalytic Proton acceptor. The 244-residue stretch at 122 to 365 (EEDRGTLCVS…SPIRTPRGED (244 aa)) folds into the Radical SAM core domain. Residues Cys129 and Cys370 are joined by a disulfide bond. 3 residues coordinate [4Fe-4S] cluster: Cys136, Cys140, and Cys143. Residues 196-197 (GE), Ser228, 250-252 (SFH), and Asn327 each bind S-adenosyl-L-methionine. Cys370 functions as the S-methylcysteine intermediate in the catalytic mechanism.

It belongs to the radical SAM superfamily. RlmN family. [4Fe-4S] cluster is required as a cofactor.

The protein localises to the cytoplasm. The enzyme catalyses adenosine(2503) in 23S rRNA + 2 reduced [2Fe-2S]-[ferredoxin] + 2 S-adenosyl-L-methionine = 2-methyladenosine(2503) in 23S rRNA + 5'-deoxyadenosine + L-methionine + 2 oxidized [2Fe-2S]-[ferredoxin] + S-adenosyl-L-homocysteine. It carries out the reaction adenosine(37) in tRNA + 2 reduced [2Fe-2S]-[ferredoxin] + 2 S-adenosyl-L-methionine = 2-methyladenosine(37) in tRNA + 5'-deoxyadenosine + L-methionine + 2 oxidized [2Fe-2S]-[ferredoxin] + S-adenosyl-L-homocysteine. Functionally, specifically methylates position 2 of adenine 2503 in 23S rRNA and position 2 of adenine 37 in tRNAs. m2A2503 modification seems to play a crucial role in the proofreading step occurring at the peptidyl transferase center and thus would serve to optimize ribosomal fidelity. The sequence is that of Dual-specificity RNA methyltransferase RlmN from Dinoroseobacter shibae (strain DSM 16493 / NCIMB 14021 / DFL 12).